Consider the following 370-residue polypeptide: tRNA-specific 2-thiouridylase MnmA (370 aa).

ATP is bound by residues 20 to 27 and Met-46; that span reads GMSGGVDS. The tract at residues 106 to 108 is interaction with target base in tRNA; sequence NPD. The active-site Nucleophile is Cys-111. Residues Cys-111 and Cys-207 are joined by a disulfide bond. Gly-135 is a binding site for ATP. Residues 157–159 are interaction with tRNA; the sequence is KDQ. Catalysis depends on Cys-207, which acts as the Cysteine persulfide intermediate. Residues 318–319 are interaction with tRNA; the sequence is RY.

It belongs to the MnmA/TRMU family.

It is found in the cytoplasm. It carries out the reaction S-sulfanyl-L-cysteinyl-[protein] + uridine(34) in tRNA + AH2 + ATP = 2-thiouridine(34) in tRNA + L-cysteinyl-[protein] + A + AMP + diphosphate + H(+). Its function is as follows. Catalyzes the 2-thiolation of uridine at the wobble position (U34) of tRNA, leading to the formation of s(2)U34. In Polynucleobacter asymbioticus (strain DSM 18221 / CIP 109841 / QLW-P1DMWA-1) (Polynucleobacter necessarius subsp. asymbioticus), this protein is tRNA-specific 2-thiouridylase MnmA.